Consider the following 530-residue polypeptide: Histone-arginine methyltransferase CARMER (530 aa).

An SAM-dependent MTase PRMT-type domain is found at 141-450; sequence ASQYFQFYGY…QSYDVTIDLH (310 aa). S-adenosyl-L-methionine contacts are provided by Q154, R163, G187, E209, E238, and T266. Asymmetric dimethylarginine; by autocatalysis is present on R501.

The protein belongs to the class I-like SAM-binding methyltransferase superfamily. Protein arginine N-methyltransferase family. In terms of assembly, homodimer. Post-translationally, the dimethylated protein is the major form.

It is found in the cytoplasm. It localises to the nucleus. It carries out the reaction L-arginyl-[protein] + 2 S-adenosyl-L-methionine = N(omega),N(omega)-dimethyl-L-arginyl-[protein] + 2 S-adenosyl-L-homocysteine + 2 H(+). Methylates (mono- and asymmetric dimethylation) the guanidino nitrogens of arginyl residues in proteins. May methylate histone H3 at 'Arg-17' and activate transcription via chromatin remodeling. This Drosophila simulans (Fruit fly) protein is Histone-arginine methyltransferase CARMER (Art4).